The primary structure comprises 1053 residues: 3-hydroxy-3-methylglutaryl-coenzyme A reductase (1053 aa).

The Cytoplasmic segment spans residues 1 to 8 (MIYKLAAR). The chain crosses the membrane as a helical span at residues 9–29 (YPIQVIAIVGILVSMAYFSFL). Topologically, residues 30–203 (EALTQEDFPV…LKIASQASKT (174 aa)) are lumenal. N137 carries N-linked (GlcNAc...) asparagine glycosylation. The chain crosses the membrane as a helical span at residues 204-224 (ELLIVGTAYACMLISIVSLYL). One can recognise an SSD domain in the interval 204 to 365 (ELLIVGTAYA…FSFFVAILTL (162 aa)). At 225 to 232 (KMRRLGSK) the chain is on the cytoplasmic side. The helical transmembrane segment at 233 to 253 (FWLFFSVLLSTLFSVQFAMTL) threads the bilayer. The Lumenal segment spans residues 254–258 (VRASG). Residues 259–279 (VRISLVSLIESLPFLINVVAL) traverse the membrane as a helical segment. Residues 280 to 320 (DKAAELTRQVITRCSVSDSHSPMHEDIAKACRNAAPPILRH) lie on the Cytoplasmic side of the membrane. 2 helical membrane passes run 321–341 (FSFG…IKQF) and 342–362 (FLFA…FVAI). Topologically, residues 363–417 (LTLKLEMRRYNAKDDVRKVLIEEGLSESTARHVADGNDSSATTSAGSRYFKVRYG) are cytoplasmic. A helical membrane pass occupies residues 418-438 (TKIILFIFIAFNLFELCSIPF). Residues 439–526 (KHYAATSAAA…NNWSHYISAS (88 aa)) lie on the Lumenal side of the membrane. The N-linked (GlcNAc...) asparagine glycan is linked to N518. A helical transmembrane segment spans residues 527 to 547 (FLSKWIVCALSLSIAVNVFLL). Over 548-1053 (NAARLNSIKE…KSVNSRVPGR (506 aa)) the chain is Cytoplasmic. E712 acts as the Charge relay system in catalysis. A CoA-binding site is contributed by 718 to 724 (STMRGCK). NADP(+) is bound by residues 779 to 781 (SRF) and 806 to 814 (DAMGMNMIS). The Charge relay system role is filled by K846. 875–877 (VLK) contacts CoA. D922 functions as the Charge relay system in the catalytic mechanism. 1017–1018 (SH) is a CoA binding site. H1018 functions as the Proton donor in the catalytic mechanism. 1022–1023 (NR) lines the NADP(+) pocket. S1024 carries the post-translational modification Phosphoserine. Phosphothreonine is present on T1028. The disordered stretch occupies residues 1028 to 1053 (TPAMDSSAKKPATDALKSVNSRVPGR).

This sequence belongs to the HMG-CoA reductase family.

Its subcellular location is the endoplasmic reticulum membrane. The protein localises to the nucleus envelope. It catalyses the reaction (R)-mevalonate + 2 NADP(+) + CoA = (3S)-3-hydroxy-3-methylglutaryl-CoA + 2 NADPH + 2 H(+). Its pathway is metabolic intermediate biosynthesis; (R)-mevalonate biosynthesis; (R)-mevalonate from acetyl-CoA: step 3/3. Its function is as follows. Part of the first module of ergosterol biosynthesis pathway that includes the early steps of the pathway, conserved across all eukaryotes, and which results in the formation of mevalonate from acetyl-coenzyme A (acetyl-CoA). Hmg1 catalyzes the reduction of hydroxymethylglutaryl-CoA (HMG-CoA) to mevalonate. The first module starts with the action of the cytosolic acetyl-CoA acetyltransferase eg10 that catalyzes the formation of acetoacetyl-CoA. The hydroxymethylglutaryl-CoA synthases erg13 then condenses acetyl-CoA with acetoacetyl-CoA to form HMG-CoA. The rate-limiting step of the early module is the reduction to mevalonate by the 3-hydroxy-3-methylglutaryl-coenzyme A (HMG-CoA) reductases hcs1. The polypeptide is 3-hydroxy-3-methylglutaryl-coenzyme A reductase (Schizosaccharomyces pombe (strain 972 / ATCC 24843) (Fission yeast)).